Consider the following 1264-residue polypeptide: Ubiquitin carboxyl-terminal hydrolase usp-48 (1264 aa).

A USP domain is found at 108–430; sequence AGLINGGNFC…ACYGLLYRRR (323 aa). Residue C117 is the Nucleophile of the active site. The active-site Proton acceptor is the H366. Disordered stretches follow at residues 390–415, 522–610, and 630–679; these read IPKP…KEKY, AKGE…IMDT, and TVEV…PVSS. Composition is skewed to basic and acidic residues over residues 403–415 and 532–543; these read KTEK…KEKY and EASENEEKKKNE. Residues 516 to 547 are a coiled coil; it reads AQEYEVAKGEKKKKKKEASENEEKKKNEEDEA. Residues 565–575 show a composition bias toward low complexity; sequence SEPSTSAAATE. Polar residues-rich tracts occupy residues 587-599 and 663-678; these read ETPN…STQV and NGTN…QPVS.

Belongs to the peptidase C19 family. In terms of tissue distribution, broadly expressed. Expressed in germline.

It localises to the nucleus. The protein localises to the chromosome. The enzyme catalyses Thiol-dependent hydrolysis of ester, thioester, amide, peptide and isopeptide bonds formed by the C-terminal Gly of ubiquitin (a 76-residue protein attached to proteins as an intracellular targeting signal).. Functionally, recognizes and hydrolyzes the peptide bond at the C-terminal Gly of ubiquitin. Involved in the processing of poly-ubiquitin precursors as well as that of ubiquitinated proteins. Required post-developmentally to restrict the plasticity of epidermal cells, probably by regulating gene expression. This is Ubiquitin carboxyl-terminal hydrolase usp-48 from Caenorhabditis elegans.